The sequence spans 173 residues: Protein tyrosine phosphatase type IVA 1 (173 aa).

The Tyrosine-protein phosphatase domain maps to 8–161 (APVEVTYKNM…YRPKMRLRFK (154 aa)). The cysteines at positions 49 and 104 are disulfide-linked. The active-site Proton donor is the D72. Positions 97 to 132 (GCCIAVHCVAGLGRAPVLVALALIEGGMKYEDAVQF) are interaction with ATF5. The active-site Phosphocysteine intermediate is the C104. Phosphate is bound at residue 105-110 (VAGLGR). A substrate-binding site is contributed by R110. The residue at position 170 (C170) is a Cysteine methyl ester. The S-farnesyl cysteine moiety is linked to residue C170. Positions 171–173 (CIQ) are cleaved as a propeptide — removed in mature form.

Belongs to the protein-tyrosine phosphatase family. As to quaternary structure, homotrimer. Interacts with ATF5 and tubulin. In terms of processing, farnesylated. Farnesylation is required for membrane targeting.

It localises to the cell membrane. The protein localises to the early endosome. It is found in the endoplasmic reticulum. Its subcellular location is the cytoplasm. The protein resides in the cytoskeleton. It localises to the spindle. The protein localises to the nucleus. The catalysed reaction is O-phospho-L-tyrosyl-[protein] + H2O = L-tyrosyl-[protein] + phosphate. With respect to regulation, inhibited by sodium orthovanadate and pentamidine. In terms of biological role, protein tyrosine phosphatase which stimulates progression from G1 into S phase during mitosis. May play a role in the development and maintenance of differentiating epithelial tissues. The chain is Protein tyrosine phosphatase type IVA 1 (PTP4A1) from Pongo abelii (Sumatran orangutan).